A 578-amino-acid polypeptide reads, in one-letter code: Putative multidrug export ATP-binding/permease protein SAB1799c (578 aa).

The Cytoplasmic portion of the chain corresponds to 1-15; sequence MIKRYLQFVKPYKYR. A helical transmembrane segment spans residues 16–36; it reads IFATIIVGIIKFGIPMLIPLL. The region spanning 16-306 is the ABC transmembrane type-1 domain; the sequence is IFATIIVGII…LVASFTTLTQ (291 aa). Residues 37 to 59 lie on the Extracellular side of the membrane; it reads IKYAIDGVINNHALTTDEKVHHL. Residues 60–80 form a helical membrane-spanning segment; it reads TIAIGIALFIFVIVRPPIEFI. Over 81 to 138 the chain is Cytoplasmic; the sequence is RQYLAQWTSNKILYDIRKKLYNHLQALSARFYANNQVGQVISRVINDVEQTKDFILTG. The helical transmembrane segment at 139–159 threads the bilayer; sequence LMNIWLDCITIIIALSIMFFL. Residues 160 to 162 are Extracellular-facing; it reads DVK. Residues 163 to 183 form a helical membrane-spanning segment; sequence LTLAALFIFPFYILTVYVFFG. Residues 184 to 242 are Cytoplasmic-facing; that stretch reads RLRKLTRERSQALAEVQGFLHERVQGISVVKSFAIEDNEAKNFDKKNANFLTRALKHTR. Residues 243 to 262 traverse the membrane as a helical segment; it reads WNAYSFATINTVTDIGPIIV. At 263 to 267 the chain is on the extracellular side; the sequence is IGVGA. Residues 268 to 287 traverse the membrane as a helical segment; that stretch reads YLAISGSITVGTLAAFVGYL. The Cytoplasmic segment spans residues 288–578; it reads ELLFGPLRRL…YEHLYSIQNL (291 aa). The ABC transporter domain occupies 340 to 575; that stretch reads IDIYHVNFQY…QGAYEHLYSI (236 aa). An ATP-binding site is contributed by 374 to 381; sequence GMSGGGKS.

This sequence belongs to the ABC transporter superfamily. In terms of assembly, homodimer.

The protein localises to the cell membrane. Its function is as follows. May be involved in multidrug export. Transmembrane domains (TMD) form a pore in the cell membrane and the ATP-binding domain (NBD) is responsible for energy generation. In Staphylococcus aureus (strain bovine RF122 / ET3-1), this protein is Putative multidrug export ATP-binding/permease protein SAB1799c.